The primary structure comprises 864 residues: 3-O-alpha-D-mannopyranosyl-alpha-D-mannopyranose xylosylphosphotransferase (864 aa).

The disordered stretch occupies residues 1-66; sequence MPSTALSPPS…VPPRSPSRKI (66 aa). The Cytoplasmic segment spans residues 1-82; the sequence is MPSTALSPPS…HIRPHITPRT (82 aa). 2 stretches are compositionally biased toward low complexity: residues 16 to 29 and 42 to 52; these read SYDS…PSSP and SPSPSRLESLL. Residues 83 to 103 form a helical membrane-spanning segment; it reads LTPVFLWTLALWLIHHFLFPL. Residues 104–864 lie on the Lumenal side of the membrane; sequence SSPFAKLAKP…WDPVKDRYND (761 aa). 3 N-linked (GlcNAc...) asparagine glycosylation sites follow: Asn200, Asn301, and Asn583.

The protein belongs to the XPT1 family. Mn(2+) serves as cofactor.

The protein resides in the golgi apparatus membrane. It catalyses the reaction 3-alpha-D-mannopyranosyl-alpha-D-mannopyranose + UDP-alpha-D-xylose = 3-O-(6-O-alpha-D-xylosylphospho-alpha-D-mannopyranosyl)-alpha-D-mannopyranose + UMP + H(+). In terms of biological role, xylosylphosphotransferase that is specific for UDP-xylose as a donor and mannose as an acceptor to form a xylose-alpha-1-phosphate-6-mannose linkage. Functions in the O-glycosylation of proteins en route through the secretory pathway. The sequence is that of 3-O-alpha-D-mannopyranosyl-alpha-D-mannopyranose xylosylphosphotransferase (XPT1) from Cryptococcus neoformans var. grubii (Filobasidiella neoformans var. grubii).